Reading from the N-terminus, the 547-residue chain is MKTKFIFVTGGVLSSLGKGLAAASLGALLQTRGLSVTIQKLDPYINVDPGTMNPFQHGEVFVTDDGAETDLDLGHYERYLNVPMSRKNNTTSGAIYNQVIAKERHGDYLGATVQVIPHITDEIKSVVLSLAEGEDAPDVAIIEIGGTVGDIEGLPFLEAIRQLRSELGRDNCLNIHLTLVPYLRSAGEHKTKPTQHSVKELLSIGIQPDIILCRCEQSIPEELRRKIALFCNVDQDAVFSSVDVNNIYEVPLKFYAEGFDQKVAIMLRLPARNAQLDAWEKLVSDSDNPHGKVTVAIVGKYVDLKEAYKSLHEALIHGGVANRVQVDLRYVNSENVDDSNAAEHFKGCDGILVPGGFGYRGVEGKIAAIRYARENKVPFFGICLGMQCAVIEFARHMADMADANSEEFDHRSKHKVIYLMTEWYDFRTRNVEKRDAGSDKGGTMRLGSYPCKVMPESRAFEAYKTDMVEERHRHRYEFNNEFKEALAEKGMIFSGTSPDGSLMEIIELPEHPWFLGCQFHPEFKSRPMNAHPLFREFIGAAKKHAKV.

Residues 1-269 (MKTKFIFVTG…DQKVAIMLRL (269 aa)) form an amidoligase domain region. Ser-14 lines the CTP pocket. Residue Ser-14 coordinates UTP. Residues 15–20 (SLGKGL) and Asp-72 each bind ATP. Residues Asp-72 and Glu-143 each contribute to the Mg(2+) site. Residues 150–152 (DIE), 190–195 (KTKPTQ), and Lys-226 each bind CTP. Residues 190–195 (KTKPTQ) and Lys-226 each bind UTP. In terms of domain architecture, Glutamine amidotransferase type-1 spans 294 to 547 (TVAIVGKYVD…IGAAKKHAKV (254 aa)). Gly-356 is an L-glutamine binding site. Catalysis depends on Cys-383, which acts as the Nucleophile; for glutamine hydrolysis. L-glutamine-binding positions include 384 to 387 (LGMQ), Glu-407, and Arg-475. Residues His-520 and Glu-522 contribute to the active site.

This sequence belongs to the CTP synthase family. As to quaternary structure, homotetramer.

It carries out the reaction UTP + L-glutamine + ATP + H2O = CTP + L-glutamate + ADP + phosphate + 2 H(+). The enzyme catalyses L-glutamine + H2O = L-glutamate + NH4(+). It catalyses the reaction UTP + NH4(+) + ATP = CTP + ADP + phosphate + 2 H(+). It functions in the pathway pyrimidine metabolism; CTP biosynthesis via de novo pathway; CTP from UDP: step 2/2. With respect to regulation, allosterically activated by GTP, when glutamine is the substrate; GTP has no effect on the reaction when ammonia is the substrate. The allosteric effector GTP functions by stabilizing the protein conformation that binds the tetrahedral intermediate(s) formed during glutamine hydrolysis. Inhibited by the product CTP, via allosteric rather than competitive inhibition. In terms of biological role, catalyzes the ATP-dependent amination of UTP to CTP with either L-glutamine or ammonia as the source of nitrogen. Regulates intracellular CTP levels through interactions with the four ribonucleotide triphosphates. The sequence is that of CTP synthase from Desulfovibrio desulfuricans (strain ATCC 27774 / DSM 6949 / MB).